The chain runs to 160 residues: Biogenesis of lysosome-related organelles complex 1 subunit 5 (160 aa).

It belongs to the BLOC1S5 family. Component of the biogenesis of lysosome-related organelles complex-1 (BLOC-1) composed of Blos1, Blos2, Blos3, Blos4, Dysb, Muted, Pldn and Snapin.

Functionally, component of the biogenesis of lysosome-related organelles complex-1 (BLOC-1) involved in pigment granule biogenesis. The sequence is that of Biogenesis of lysosome-related organelles complex 1 subunit 5 from Drosophila melanogaster (Fruit fly).